Reading from the N-terminus, the 217-residue chain is UDP-N-acetylglucosamine transferase subunit ALG14 (217 aa).

Topologically, residues 1 to 3 are lumenal; the sequence is MLS. A helical membrane pass occupies residues 4-26; it reads ILILAATAAGLVILLFQRLWTVL. The Cytoplasmic segment spans residues 27-217; the sequence is GPHHVTPRES…PKSVYLGRIV (191 aa).

This sequence belongs to the ALG14 family. In terms of assembly, forms with ALG13 the active heterodimeric UDP-N-acetylglucosamine transferase complex.

The protein resides in the endoplasmic reticulum membrane. In terms of biological role, part of the UDP-N-acetylglucosamine transferase complex that operates in the biosynthetic pathway of dolichol-linked oligosaccharides, the glycan precursors employed in protein asparagine (N)-glycosylation. The assembly of dolichol-linked oligosaccharides begins on the cytosolic side of the endoplasmic reticulum membrane and finishes in its lumen. The sequential addition of sugars to dolichol pyrophosphate produces dolichol-linked oligosaccharides containing fourteen sugars, including two GlcNAcs, nine mannoses and three glucoses. Once assembled, the oligosaccharides are transferred from the lipid to nascent proteins by oligosaccharyltransferases. Functions as a protein-membrane adapter recruiting ALG13 at the cytoplasmic face of the endoplasmic reticulum, where the complex catalyzes the second step of dolichol pyrophosphate biosynthesis, transferring a beta1,4-linked N-acetylglucosamine (GlcNAc) from UDP-GlcNAc to GlcNAc-pyrophosphatedolichol (Gn-PDol) to produce N,N'-diacetylchitobiosyl diphosphodolichol. N,N'-diacetylchitobiosyl diphosphodolichol is a substrate for ALG1, the following enzyme in the biosynthetic pathway. This chain is UDP-N-acetylglucosamine transferase subunit ALG14, found in Mus musculus (Mouse).